The primary structure comprises 74 residues: UPF0346 protein RBAM_019500 (74 aa).

The protein belongs to the UPF0346 family.

This chain is UPF0346 protein RBAM_019500, found in Bacillus velezensis (strain DSM 23117 / BGSC 10A6 / LMG 26770 / FZB42) (Bacillus amyloliquefaciens subsp. plantarum).